Reading from the N-terminus, the 166-residue chain is 6,7-dimethyl-8-ribityllumazine synthase (166 aa).

Residues Phe22, 56–58, and 80–82 each bind 5-amino-6-(D-ribitylamino)uracil; these read SME and AVI. 85-86 contributes to the (2S)-2-hydroxy-3-oxobutyl phosphate binding site; sequence ET. The active-site Proton donor is the His88. A 5-amino-6-(D-ribitylamino)uracil-binding site is contributed by Phe113. Arg127 lines the (2S)-2-hydroxy-3-oxobutyl phosphate pocket.

Belongs to the DMRL synthase family.

It catalyses the reaction (2S)-2-hydroxy-3-oxobutyl phosphate + 5-amino-6-(D-ribitylamino)uracil = 6,7-dimethyl-8-(1-D-ribityl)lumazine + phosphate + 2 H2O + H(+). Its pathway is cofactor biosynthesis; riboflavin biosynthesis; riboflavin from 2-hydroxy-3-oxobutyl phosphate and 5-amino-6-(D-ribitylamino)uracil: step 1/2. Functionally, catalyzes the formation of 6,7-dimethyl-8-ribityllumazine by condensation of 5-amino-6-(D-ribitylamino)uracil with 3,4-dihydroxy-2-butanone 4-phosphate. This is the penultimate step in the biosynthesis of riboflavin. The sequence is that of 6,7-dimethyl-8-ribityllumazine synthase from Thermotoga neapolitana (strain ATCC 49049 / DSM 4359 / NBRC 107923 / NS-E).